Consider the following 933-residue polypeptide: Serine/threonine-protein kinase PknD (933 aa).

The Protein kinase domain maps to 4-291; sequence YDIIRMIGKG…ELKDDIEQHL (288 aa). ATP is bound by residues 10 to 18 and lysine 33; that span reads IGKGGMGEV. Residue aspartate 138 is the Proton acceptor of the active site.

This sequence belongs to the protein kinase superfamily. Ser/Thr protein kinase family. In terms of processing, autophosphorylated on serine and threonine residues.

The catalysed reaction is L-seryl-[protein] + ATP = O-phospho-L-seryl-[protein] + ADP + H(+). The enzyme catalyses L-threonyl-[protein] + ATP = O-phospho-L-threonyl-[protein] + ADP + H(+). Together with the serine/threonine kinase Pkn1, may play a role in the specific interactions with host proteins during intracellular growth. This is Serine/threonine-protein kinase PknD from Chlamydia felis (strain Fe/C-56) (Chlamydophila felis).